The following is a 313-amino-acid chain: MTQTKLSTQTTTDNNQEDNDVIIEQFLDSIWLEQGLSANTLSAYRLDLQALSQWLVTQKLNWLSVTTLDLHAFLATRLDEGYKATSAARLLSTLRRFFQYLYREKLRQDDPSALLSTPKLPKRLPKDLSEQQVENLLSAPCIDEPIELRDKAMLEVLYACGLRVSELVGLSLSDISLRQGVLRVIGKGDKERLVPLGEEAIYWLEQYLQYGRPALMQGKTDDIVFPSLRGQKMTRQTFWHRIKHYAVIAGIDSEKLSPHVLRHAFATHLLNHGADLRVVQMLLGHSDLSTTQIYTHVATERLKVLHQQHHPRG.

One can recognise a Core-binding (CB) domain in the interval 17–102; sequence EDNDVIIEQF…TLRRFFQYLY (86 aa). Positions 123–307 constitute a Tyr recombinase domain; it reads RLPKDLSEQQ…ATERLKVLHQ (185 aa). Catalysis depends on residues arginine 163, lysine 187, histidine 259, arginine 262, and histidine 285. The active-site O-(3'-phospho-DNA)-tyrosine intermediate is tyrosine 294.

This sequence belongs to the 'phage' integrase family. XerD subfamily. Forms a cyclic heterotetrameric complex composed of two molecules of XerC and two molecules of XerD, in which XerC interacts with XerD via its C-terminal region, XerD interacts with XerC via its C-terminal region and so on.

Its subcellular location is the cytoplasm. Its activity is regulated as follows. FtsK may regulate the catalytic switch between XerC and XerD in the heterotetrameric complex during the two steps of the recombination process. Its function is as follows. Site-specific tyrosine recombinase, which acts by catalyzing the cutting and rejoining of the recombining DNA molecules. Binds cooperatively to specific DNA consensus sequences that are separated from XerC binding sites by a short central region, forming the heterotetrameric XerC-XerD complex that recombines DNA substrates. The complex is essential to convert dimers of the bacterial chromosome into monomers to permit their segregation at cell division. It also contributes to the segregational stability of plasmids. In the complex XerD specifically exchanges the bottom DNA strands. This chain is Tyrosine recombinase XerD, found in Proteus mirabilis.